We begin with the raw amino-acid sequence, 2280 residues long: Protein Ycf2 (2280 aa).

Residue 1634 to 1641 (GSIGTGRS) coordinates ATP.

It belongs to the Ycf2 family.

It localises to the plastid. Its subcellular location is the chloroplast stroma. Probable ATPase of unknown function. Its presence in a non-photosynthetic plant (Epifagus virginiana) and experiments in tobacco indicate that it has an essential function which is probably not related to photosynthesis. The sequence is that of Protein Ycf2 from Eucalyptus globulus subsp. globulus (Tasmanian blue gum).